The primary structure comprises 445 residues: Fibrinogen gamma chain (445 aa).

The signal sequence occupies residues 1–25; the sequence is MNWSLQLRSFILCWALLLLSPTGLA. N78 carries an N-linked (GlcNAc...) asparagine glycan. In terms of domain architecture, Fibrinogen C-terminal spans 170–416; sequence RIHDTTGKDC…ETTMKIIPFN (247 aa). Residues C179 and C208 are joined by a disulfide bond. D344, D346, and G350 together coordinate Ca(2+). A disulfide bridge connects residues C352 and C365. Residues 400 to 422 are gamma-chain polymerization, binding amino end of another fibrin alpha chain; it reads TRWYSMKETTMKIIPFNRLSIGD. Q424 is covalently cross-linked (Isoglutamyl lysine isopeptide (Gln-Lys) (interchain with K-432)). A disordered region spans residues 424-445; sequence QQHHMGGSKQVSVEHEVDVEYP. S431 carries the post-translational modification Phosphoserine. Residue K432 forms an Isoglutamyl lysine isopeptide (Lys-Gln) (interchain with Q-424) linkage. Positions 435-445 are enriched in basic and acidic residues; it reads SVEHEVDVEYP.

In terms of assembly, heterohexamer; disulfide linked. Contains 2 sets of 3 non-identical chains (alpha, beta and gamma). The 2 heterotrimers are in head to head conformation with the N-termini in a small central domain. Conversion of fibrinogen to fibrin is triggered by thrombin, which cleaves fibrinopeptides A and B from alpha and beta chains, and thus exposes the N-terminal polymerization sites responsible for the formation of the soft clot. The soft clot is converted into the hard clot by factor XIIIA which catalyzes the epsilon-(gamma-glutamyl)lysine cross-linking between gamma chains (stronger) and between alpha chains (weaker) of different monomers.

The protein localises to the secreted. In terms of biological role, together with fibrinogen alpha (FGA) and fibrinogen beta (FGB), polymerizes to form an insoluble fibrin matrix. Has a major function in hemostasis as one of the primary components of blood clots. In addition, functions during the early stages of wound repair to stabilize the lesion and guide cell migration during re-epithelialization. Was originally thought to be essential for platelet aggregation, based on in vitro studies using anticoagulated blood. However, subsequent studies have shown that it is not absolutely required for thrombus formation in vivo. Enhances expression of SELP in activated platelets via an ITGB3-dependent pathway. Maternal fibrinogen is essential for successful pregnancy. Fibrin deposition is also associated with infection, where it protects against IFNG-mediated hemorrhage. May also facilitate the antibacterial immune response via both innate and T-cell mediated pathways. The sequence is that of Fibrinogen gamma chain (Fgg) from Rattus norvegicus (Rat).